The following is a 170-amino-acid chain: Probable chemoreceptor glutamine deamidase CheD 3 (170 aa).

Belongs to the CheD family.

It catalyses the reaction L-glutaminyl-[protein] + H2O = L-glutamyl-[protein] + NH4(+). Functionally, probably deamidates glutamine residues to glutamate on methyl-accepting chemotaxis receptors (MCPs), playing an important role in chemotaxis. In Dechloromonas aromatica (strain RCB), this protein is Probable chemoreceptor glutamine deamidase CheD 3.